Here is a 356-residue protein sequence, read N- to C-terminus: DNA polymerase IV (356 aa).

Residues 7–187 (IIHVDMDAFY…LPVNRVPGVG (181 aa)) form the UmuC domain. Mg(2+)-binding residues include Asp-11 and Asp-105. Residue Glu-106 is part of the active site.

Belongs to the DNA polymerase type-Y family. Monomer. The cofactor is Mg(2+).

The protein localises to the cytoplasm. The enzyme catalyses DNA(n) + a 2'-deoxyribonucleoside 5'-triphosphate = DNA(n+1) + diphosphate. Functionally, poorly processive, error-prone DNA polymerase involved in untargeted mutagenesis. Copies undamaged DNA at stalled replication forks, which arise in vivo from mismatched or misaligned primer ends. These misaligned primers can be extended by PolIV. Exhibits no 3'-5' exonuclease (proofreading) activity. May be involved in translesional synthesis, in conjunction with the beta clamp from PolIII. The chain is DNA polymerase IV from Stenotrophomonas maltophilia (strain R551-3).